Consider the following 327-residue polypeptide: BTB/POZ domain-containing protein KCTD12 (327 aa).

The tract at residues 1–28 is disordered; it reads MALADSARGLPNGGGGGGGSGSSSSSAE. Ala2 carries the N-acetylalanine modification. Residues 11 to 21 are compositionally biased toward gly residues; it reads PNGGGGGGGSG. Phosphotyrosine is present on Tyr119. The disordered stretch occupies residues 129-204; the sequence is LGAPQQPGPG…PLLTPSQSLD (76 aa). Ser153, Ser173, and Ser187 each carry phosphoserine. Position 198 is a phosphothreonine (Thr198). Ser202 is modified (phosphoserine).

In terms of assembly, interacts as a tetramer with GABBR1 and GABBR2. As to expression, expressed in the brain, mainly in the hippocampus and cerebellum.

Its subcellular location is the presynaptic cell membrane. The protein localises to the postsynaptic cell membrane. Auxiliary subunit of GABA-B receptors that determine the pharmacology and kinetics of the receptor response. Increases agonist potency and markedly alter the G-protein signaling of the receptors by accelerating onset and promoting desensitization. The chain is BTB/POZ domain-containing protein KCTD12 (Kctd12) from Mus musculus (Mouse).